We begin with the raw amino-acid sequence, 179 residues long: Large ribosomal subunit protein uL5 (179 aa).

Belongs to the universal ribosomal protein uL5 family. As to quaternary structure, part of the 50S ribosomal subunit; part of the 5S rRNA/L5/L18/L25 subcomplex. Contacts the 5S rRNA and the P site tRNA. Forms a bridge to the 30S subunit in the 70S ribosome.

This is one of the proteins that bind and probably mediate the attachment of the 5S RNA into the large ribosomal subunit, where it forms part of the central protuberance. In the 70S ribosome it contacts protein S13 of the 30S subunit (bridge B1b), connecting the 2 subunits; this bridge is implicated in subunit movement. Contacts the P site tRNA; the 5S rRNA and some of its associated proteins might help stabilize positioning of ribosome-bound tRNAs. This is Large ribosomal subunit protein uL5 from Desulfosudis oleivorans (strain DSM 6200 / JCM 39069 / Hxd3) (Desulfococcus oleovorans).